Reading from the N-terminus, the 315-residue chain is Secreted frizzled-related protein 5 (315 aa).

Residues Met1–Gly27 form the signal peptide. One can recognise an FZ domain in the interval Ser46–Val163. Cystine bridges form between Cys51–Cys114, Cys61–Cys107, Cys98–Cys133, Cys122–Cys160, Cys126–Cys150, Cys179–Cys251, Cys182–Cys253, and Cys196–Cys301. An NTR domain is found at Cys179 to Cys301.

The protein belongs to the secreted frizzled-related protein (sFRP) family. In terms of tissue distribution, strongly expressed in the retinal pigment epithelium (RPE). Weak expression in retina, brain, heart, liver, kidney, testis and muscle.

Its subcellular location is the secreted. In terms of biological role, soluble frizzled-related proteins (sFRPS) function as modulators of Wnt signaling through direct interaction with Wnts. They have a role in regulating cell growth and differentiation in specific cell types. SFRP5 may be involved in determining the polarity of photoreceptor, and perhaps other, cells in the retina. Inhibits Wnt8 signaling, in vitro. The sequence is that of Secreted frizzled-related protein 5 (SFRP5) from Bos taurus (Bovine).